Here is a 310-residue protein sequence, read N- to C-terminus: Mitochondrial citrate transporter E (310 aa).

Solcar repeat units lie at residues 2–95, 107–199, and 208–293; these read STTT…LRQG, QSLG…AKRR, and DGPG…TNKI. 6 consecutive transmembrane segments (helical) span residues 8–28, 72–92, 114–133, 178–198, 211–228, and 265–286; these read FIAG…FETV, GSAY…YEPL, LAGA…FFLV, AMVR…FAKR, GLHL…CCVM, and IYKG…TLSL.

It belongs to the mitochondrial carrier (TC 2.A.29) family.

The protein resides in the mitochondrion inner membrane. Mitochondrial transporter that does not mediate citrate export from mitochondria to cytoplasm. Its exact function has still to be determined. The chain is Mitochondrial citrate transporter E from Aspergillus niger (strain ATCC 1015 / CBS 113.46 / FGSC A1144 / LSHB Ac4 / NCTC 3858a / NRRL 328 / USDA 3528.7).